The primary structure comprises 65 residues: Large ribosomal subunit protein bL35 (65 aa).

This sequence belongs to the bacterial ribosomal protein bL35 family.

In Phytoplasma australiense, this protein is Large ribosomal subunit protein bL35.